Here is a 747-residue protein sequence, read N- to C-terminus: Myotubularin-related protein 12 (747 aa).

Gly residues predominate over residues 1-14 (MLGKGVVGGGGGTK). The tract at residues 1 to 21 (MLGKGVVGGGGGTKGPKPSFV) is disordered. The 439-residue stretch at 205 to 643 (FDTLKDWCWE…PEIKVWAQRY (439 aa)) folds into the Myotubularin phosphatase domain. The segment at 449–558 (VPVFLLFLDC…KGQRKGMRFK (110 aa)) is interaction with MTM1. A phosphoserine mark is found at Ser-564, Ser-601, and Ser-716.

Belongs to the protein-tyrosine phosphatase family. Non-receptor class myotubularin subfamily. As to quaternary structure, heterodimer with lipid phosphatase MTM1. Heterodimer with lipid phosphatase MTMR2.

The protein resides in the cytoplasm. It is found in the sarcoplasmic reticulum. The protein localises to the myofibril. Its subcellular location is the sarcomere. In terms of biological role, acts as an adapter for the myotubularin-related phosphatases. Regulates phosphatase MTM1 protein stability and possibly its intracellular location. By stabilizing MTM1 protein levels, required for skeletal muscle maintenance but not for myogenesis. This Pongo abelii (Sumatran orangutan) protein is Myotubularin-related protein 12 (MTMR12).